The primary structure comprises 169 residues: Cell division inhibitor SulA (169 aa).

Residues 106–112 (ALRTGNY) are ftsZ binding. The segment at 162–169 (KIHSNLYH) is lon protease binding.

It belongs to the SulA family. In terms of assembly, interacts with FtsZ. In terms of processing, is rapidly cleaved and degraded by the Lon protease once DNA damage is repaired.

Functionally, component of the SOS system and an inhibitor of cell division. Accumulation of SulA causes rapid cessation of cell division and the appearance of long, non-septate filaments. In the presence of GTP, binds a polymerization-competent form of FtsZ in a 1:1 ratio, thus inhibiting FtsZ polymerization and therefore preventing it from participating in the assembly of the Z ring. This mechanism prevents the premature segregation of damaged DNA to daughter cells during cell division. The chain is Cell division inhibitor SulA from Shigella boydii serotype 18 (strain CDC 3083-94 / BS512).